We begin with the raw amino-acid sequence, 751 residues long: Phosphate transporter PHO1 homolog 8 (751 aa).

The SPX domain maps to Met1–Glu299. The Cytoplasmic segment spans residues Met1 to Thr351. A helical transmembrane segment spans residues Phe352 to Ile372. Residues His373–Pro392 lie on the Extracellular side of the membrane. The chain crosses the membrane as a helical span at residues Leu393–Phe413. The Cytoplasmic portion of the chain corresponds to Trp414–Gly434. Residues Tyr435–Val455 traverse the membrane as a helical segment. Topologically, residues Asn456–Glu473 are extracellular. The helical transmembrane segment at Leu474 to Phe494 threads the bilayer. Residues Tyr495 to Lys623 are Cytoplasmic-facing. In terms of domain architecture, EXS spans Lys558–Ser751. The helical transmembrane segment at Ile624–Tyr644 threads the bilayer. Topologically, residues Asp645–Ser667 are extracellular. Residues Val668–Leu688 traverse the membrane as a helical segment. The Cytoplasmic portion of the chain corresponds to Asp689–Ser751.

This sequence belongs to the SYG1 (TC 2.A.94) family. Expressed in root epidermis, leaf hydathodes, trichomes and petioles, stem vascular cylinder, receptacle, stigma apex and pollen grains.

It localises to the cell membrane. Its function is as follows. May transport inorganic phosphate (Pi). The polypeptide is Phosphate transporter PHO1 homolog 8 (PHO1-H8) (Arabidopsis thaliana (Mouse-ear cress)).